Consider the following 497-residue polypeptide: Glycerol kinase (497 aa).

Threonine 13 lines the ADP pocket. Threonine 13, threonine 14, and serine 15 together coordinate ATP. Threonine 13 serves as a coordination point for sn-glycerol 3-phosphate. Arginine 17 serves as a coordination point for ADP. Positions 83, 84, and 135 each coordinate sn-glycerol 3-phosphate. Glycerol-binding residues include arginine 83, glutamate 84, and tyrosine 135. A Phosphohistidine; by HPr modification is found at histidine 231. Aspartate 245 contacts sn-glycerol 3-phosphate. Glycerol is bound by residues aspartate 245 and glutamine 246. Positions 267 and 310 each coordinate ADP. Residues threonine 267, glycine 310, glutamine 314, and glycine 411 each coordinate ATP. Residues glycine 411 and asparagine 415 each contribute to the ADP site.

It belongs to the FGGY kinase family. In terms of assembly, homotetramer and homodimer (in equilibrium). Post-translationally, the phosphoenolpyruvate-dependent sugar phosphotransferase system (PTS), including enzyme I, and histidine-containing protein (HPr) are required for the phosphorylation, which leads to the activation of the enzyme.

It catalyses the reaction glycerol + ATP = sn-glycerol 3-phosphate + ADP + H(+). Its pathway is polyol metabolism; glycerol degradation via glycerol kinase pathway; sn-glycerol 3-phosphate from glycerol: step 1/1. Activated by phosphorylation and inhibited by fructose 1,6-bisphosphate (FBP). Its function is as follows. Key enzyme in the regulation of glycerol uptake and metabolism. Catalyzes the phosphorylation of glycerol to yield sn-glycerol 3-phosphate. This Listeria monocytogenes serotype 4b (strain F2365) protein is Glycerol kinase.